Consider the following 392-residue polypeptide: Dual-specificity RNA methyltransferase RlmN (392 aa).

Glu-116 (proton acceptor) is an active-site residue. In terms of domain architecture, Radical SAM core spans 122–364 (EEGRGTLCVS…SPIRTPRGED (243 aa)). A disulfide bridge connects residues Cys-129 and Cys-369. [4Fe-4S] cluster contacts are provided by Cys-136, Cys-140, and Cys-143. Residues 195–196 (GE), Ser-227, 249–251 (SFH), and Asn-326 contribute to the S-adenosyl-L-methionine site. Cys-369 acts as the S-methylcysteine intermediate in catalysis.

The protein belongs to the radical SAM superfamily. RlmN family. The cofactor is [4Fe-4S] cluster.

It is found in the cytoplasm. The catalysed reaction is adenosine(2503) in 23S rRNA + 2 reduced [2Fe-2S]-[ferredoxin] + 2 S-adenosyl-L-methionine = 2-methyladenosine(2503) in 23S rRNA + 5'-deoxyadenosine + L-methionine + 2 oxidized [2Fe-2S]-[ferredoxin] + S-adenosyl-L-homocysteine. It carries out the reaction adenosine(37) in tRNA + 2 reduced [2Fe-2S]-[ferredoxin] + 2 S-adenosyl-L-methionine = 2-methyladenosine(37) in tRNA + 5'-deoxyadenosine + L-methionine + 2 oxidized [2Fe-2S]-[ferredoxin] + S-adenosyl-L-homocysteine. Functionally, specifically methylates position 2 of adenine 2503 in 23S rRNA and position 2 of adenine 37 in tRNAs. m2A2503 modification seems to play a crucial role in the proofreading step occurring at the peptidyl transferase center and thus would serve to optimize ribosomal fidelity. In Cereibacter sphaeroides (strain ATCC 17029 / ATH 2.4.9) (Rhodobacter sphaeroides), this protein is Dual-specificity RNA methyltransferase RlmN.